We begin with the raw amino-acid sequence, 277 residues long: Outer plastidial membrane protein porin (277 aa).

It belongs to the eukaryotic mitochondrial porin (TC 1.B.8.1) family.

It localises to the plastid outer membrane. Forms a channel through the cell membrane that allows diffusion of small hydrophilic molecules. The channel adopts an open conformation at low or zero membrane potential and a closed conformation at potentials above 30-40 mV. The open state has a weak anion selectivity whereas the closed state is cation-selective. The protein is Outer plastidial membrane protein porin (POR1) of Zea mays (Maize).